The primary structure comprises 406 residues: Succinylornithine transaminase (406 aa).

The residue at position 252 (K252) is an N6-(pyridoxal phosphate)lysine.

It belongs to the class-III pyridoxal-phosphate-dependent aminotransferase family. AstC subfamily. It depends on pyridoxal 5'-phosphate as a cofactor.

It catalyses the reaction N(2)-succinyl-L-ornithine + 2-oxoglutarate = N-succinyl-L-glutamate 5-semialdehyde + L-glutamate. Its pathway is amino-acid degradation; L-arginine degradation via AST pathway; L-glutamate and succinate from L-arginine: step 3/5. In terms of biological role, catalyzes the transamination of N(2)-succinylornithine and alpha-ketoglutarate into N(2)-succinylglutamate semialdehyde and glutamate. Can also act as an acetylornithine aminotransferase. The sequence is that of Succinylornithine transaminase from Escherichia coli O45:K1 (strain S88 / ExPEC).